We begin with the raw amino-acid sequence, 129 residues long: Ribosome-binding factor A (129 aa).

Belongs to the RbfA family. As to quaternary structure, monomer. Binds 30S ribosomal subunits, but not 50S ribosomal subunits or 70S ribosomes.

The protein localises to the cytoplasm. One of several proteins that assist in the late maturation steps of the functional core of the 30S ribosomal subunit. Associates with free 30S ribosomal subunits (but not with 30S subunits that are part of 70S ribosomes or polysomes). Required for efficient processing of 16S rRNA. May interact with the 5'-terminal helix region of 16S rRNA. In Gloeobacter violaceus (strain ATCC 29082 / PCC 7421), this protein is Ribosome-binding factor A.